The chain runs to 644 residues: Macrolide export ATP-binding/permease protein MacB (644 aa).

Residues 4–242 (IECKNINRCF…SNVGRIREKA (239 aa)) enclose the ABC transporter domain. Residue 40–47 (GQSGSGKS) participates in ATP binding. The next 4 helical transmembrane spans lie at 270–290 (LLTM…VALG), 524–544 (IALI…LVSV), 574–594 (LICI…SLVF), and 607–627 (AASV…FGFM).

Belongs to the ABC transporter superfamily. Macrolide exporter (TC 3.A.1.122) family. As to quaternary structure, homodimer.

It localises to the cell inner membrane. In terms of biological role, non-canonical ABC transporter that contains transmembrane domains (TMD), which form a pore in the inner membrane, and an ATP-binding domain (NBD), which is responsible for energy generation. Confers resistance against macrolides. This chain is Macrolide export ATP-binding/permease protein MacB, found in Neisseria gonorrhoeae (strain ATCC 700825 / FA 1090).